Consider the following 1299-residue polypeptide: DExH-box ATP-dependent RNA helicase DExH6 (1299 aa).

Positions 15–82 (PTSVEATRIW…QRRLSIFKSR (68 aa)) constitute an R3H domain. The region spanning 197–366 (TSAVESNQVI…FGGCPVVRVP (170 aa)) is the Helicase ATP-binding domain. Position 210-217 (210-217 (GETGCGKT)) interacts with ATP. A DEIH box motif is present at residues 313–316 (DEIH). The 175-residue stretch at 537-711 (LIQQLMRKIC…ELCLQVKILD (175 aa)) folds into the Helicase C-terminal domain. Disordered regions lie at residues 987 to 1039 (PTGS…MMSS) and 1175 to 1299 (IPRQ…AEQK). Residues 992 to 1006 (DSDDSNEEEEDDEEV) show a composition bias toward acidic residues. Residues 1007–1020 (AANTNEEVAANTNE) show a composition bias toward low complexity. Over residues 1023–1032 (MDIHKEESRR) the composition is skewed to basic and acidic residues. 3 stretches are compositionally biased toward polar residues: residues 1176-1193 (PRQQ…NNTD), 1204-1214 (NPTNRINQPEA), and 1239-1251 (PSDQ…QHNT). A Bipartite nuclear localization signal motif is present at residues 1182-1200 (KQRNPKATNNTDSGKKKEK). Residues 1267–1283 (KKTKTRSGNNSDSGKKK) carry the Bipartite nuclear localization signal motif. Residues 1279-1299 (SGKKKEQYIPKRQREDKAEQK) show a composition bias toward basic and acidic residues.

The protein belongs to the DExH box helicase family. As to expression, specifically expressed in the tapetum and vascular tissues.

The protein resides in the nucleus. The catalysed reaction is ATP + H2O = ADP + phosphate + H(+). May function as an ATP-dependent RNA/DNA helicase. The sequence is that of DExH-box ATP-dependent RNA helicase DExH6 from Arabidopsis thaliana (Mouse-ear cress).